A 178-amino-acid chain; its full sequence is Inorganic pyrophosphatase (178 aa).

Substrate contacts are provided by lysine 30, arginine 44, and tyrosine 56. Residues aspartate 66, aspartate 71, and aspartate 103 each contribute to the Mg(2+) site. Tyrosine 142 provides a ligand contact to substrate.

This sequence belongs to the PPase family. As to quaternary structure, homohexamer. The cofactor is Mg(2+).

It localises to the cytoplasm. It carries out the reaction diphosphate + H2O = 2 phosphate + H(+). Its function is as follows. Catalyzes the hydrolysis of inorganic pyrophosphate (PPi) forming two phosphate ions. The protein is Inorganic pyrophosphatase of Xanthomonas axonopodis pv. citri (strain 306).